A 251-amino-acid chain; its full sequence is Probable transcriptional regulatory protein TGRD_462 (251 aa).

The protein belongs to the TACO1 family.

It localises to the cytoplasm. This is Probable transcriptional regulatory protein TGRD_462 from Endomicrobium trichonymphae.